The primary structure comprises 830 residues: WD repeat-containing protein 75 (830 aa).

9 WD repeats span residues 4–43 (EENI…KVYS), 47–86 (EECV…KLWD), 90–131 (GILI…QLVS), 145–184 (KELS…YFFK), 193–231 (LSSS…RLWR), 237–276 (KKYT…VEWR), 279–318 (TEKN…IIIH), 324–362 (SAVI…QFYS), and 376–423 (QQEY…KLWM). Residue lysine 123 forms a Glycyl lysine isopeptide (Lys-Gly) (interchain with G-Cter in SUMO2) linkage. Residue lysine 427 forms a Glycyl lysine isopeptide (Lys-Gly) (interchain with G-Cter in SUMO2) linkage. WD repeat units lie at residues 430-474 (GFIL…KVWI), 487-525 (GWTC…TIWD), 529-569 (WELK…CCWN), and 574-611 (ALEW…FVFK). N6-acetyllysine is present on lysine 466. A phosphoserine mark is found at serine 664 and serine 672. A Glycyl lysine isopeptide (Lys-Gly) (interchain with G-Cter in SUMO2) cross-link involves residue lysine 676. The disordered stretch occupies residues 763-806 (SAKEIPEDVDMEEEKESEDSDEENDFTEKVQDTSNTGLGEDIIH). The span at 769-787 (EDVDMEEEKESEDSDEEND) shows a compositional bias: acidic residues. A phosphoserine mark is found at serine 779, serine 782, serine 796, and serine 811.

As to quaternary structure, component of the proposed t-UTP subcomplex of the ribosomal small subunit (SSU) processome. SSU processome is composed of more than 70 proteins and the RNA chaperone small nucleolar RNA (snoRNA) U3.

The protein resides in the nucleus. Its subcellular location is the nucleolus. Ribosome biogenesis factor. Part of the small subunit (SSU) processome, first precursor of the small eukaryotic ribosomal subunit. During the assembly of the SSU processome in the nucleolus, many ribosome biogenesis factors, an RNA chaperone and ribosomal proteins associate with the nascent pre-rRNA and work in concert to generate RNA folding, modifications, rearrangements and cleavage as well as targeted degradation of pre-ribosomal RNA by the RNA exosome. Involved in nucleolar processing of pre-18S ribosomal RNA. Required for optimal pre-ribosomal RNA transcription by RNA polymerase I. This is WD repeat-containing protein 75 from Homo sapiens (Human).